The primary structure comprises 274 residues: Small ribosomal subunit protein uS2 (274 aa).

The interval Ala-255–Glu-274 is disordered.

Belongs to the universal ribosomal protein uS2 family.

This chain is Small ribosomal subunit protein uS2, found in Gloeobacter violaceus (strain ATCC 29082 / PCC 7421).